We begin with the raw amino-acid sequence, 814 residues long: Ubiquitin carboxyl-terminal hydrolase 45 (814 aa).

Basic and acidic residues predominate over residues 1–14; it reads MRVKDPTKALPEKA. Residues 1–28 form a disordered region; sequence MRVKDPTKALPEKAKRSKRPTVPHDEDS. Residues 1 to 62 are interaction with ERCC1; sequence MRVKDPTKAL…AIAENLWSVC (62 aa). 2 positions are modified to phosphoserine: S28 and S29. The UBP-type zinc-finger motif lies at 36–153; that stretch reads LTCQHVSHAI…AQIVDFLQKH (118 aa). The Zn(2+) site is built by C38, H40, C62, C65, C85, C88, C93, H101, H105, H114, C127, and C130. The USP domain occupies 190-813; the sequence is RGITNLGNTC…QAYLLFYERV (624 aa). C199 (nucleophile) is an active-site residue. Disordered stretches follow at residues 418–443 and 479–533; these read IENI…IHDR and ESRL…PDGP. A compositionally biased stretch (basic and acidic residues) spans 432–443; that stretch reads SSKDKSQLIHDR. A phosphoserine mark is found at S508 and S526. The segment covering 515-527 has biased composition (polar residues); it reads KQTGLFRSSSGSG. The active-site Proton acceptor is H746.

It belongs to the peptidase C19 family. Interacts with ERCC1. The catalytically active form interacts with SPDL1. Widely expressed. High expression is detected in the cerebellum. In the eye, it is expressed at high levels in the optic nerve, sclera and retina, with relatively low levels in the choroid, lens and retinal pigment epithelium.

The protein localises to the photoreceptor inner segment. Its subcellular location is the cytoplasm. It is found in the nucleus. The catalysed reaction is Thiol-dependent hydrolysis of ester, thioester, amide, peptide and isopeptide bonds formed by the C-terminal Gly of ubiquitin (a 76-residue protein attached to proteins as an intracellular targeting signal).. In terms of biological role, catalyzes the deubiquitination of SPDL1. Plays a role in the repair of UV-induced DNA damage via deubiquitination of ERCC1, promoting its recruitment to DNA damage sites. May be involved in the maintenance of photoreceptor function. May play a role in normal retinal development. Plays a role in cell migration. The polypeptide is Ubiquitin carboxyl-terminal hydrolase 45 (USP45) (Homo sapiens (Human)).